The chain runs to 599 residues: MVLENIRNFSIIAHIDHGKSTLADRLLEYTGALSEREMQNQFLDKMDLERERGITIKAQAVRLNYRAANGKDYILNLIDTPGHVDFTYEVSRSLSACEGALLVVDASQGVEAQTLANVYLALENDLDVFPVLNKIDLPAADPERVKQEIEDIIGLDAHDAVLASAKEGIGTREILEEIVTKIPPPQGDSNKPLKALLFDSWYDQYQGVIVLVRILDGMVKKGDKIQLMSNRRNYEVLKVGVFSPAMCEVAALSAGEVGFIIAGIKDVQDAKVGDTITSLHNPCDGPLPGFKEVQPMVFSGLYPIDTSQYEQLRDALAKLKLNDSSFSYEPETSLALGFGFRCGFLGLLHMEIIQERLEREFNLDLITTAPTVVYKVHRLDGSIITIESANQLPPVQEIQYVEEPFILASIHVPNEFVGGILALCEEKRGVQREIKYLTPTRVMVIYELPLNEVVLDFYDRLKSITKGYASLDYEHLDYRRSNLERLNIMINGEVVDALSLIIHKDKAYFRGRDLVSKMKELIPRQMFEIAIQAAIGNKVIARETVKAMRKDVLAKCYGGDITRKRKLLEKQKEGKKRMKNVGNVELPQEAFLAILKVEG.

The region spanning 4–186 is the tr-type G domain; the sequence is ENIRNFSIIA…EIVTKIPPPQ (183 aa). GTP is bound by residues 16–21 and 133–136; these read DHGKST and NKID.

Belongs to the TRAFAC class translation factor GTPase superfamily. Classic translation factor GTPase family. LepA subfamily.

It localises to the cell inner membrane. It carries out the reaction GTP + H2O = GDP + phosphate + H(+). Functionally, required for accurate and efficient protein synthesis under certain stress conditions. May act as a fidelity factor of the translation reaction, by catalyzing a one-codon backward translocation of tRNAs on improperly translocated ribosomes. Back-translocation proceeds from a post-translocation (POST) complex to a pre-translocation (PRE) complex, thus giving elongation factor G a second chance to translocate the tRNAs correctly. Binds to ribosomes in a GTP-dependent manner. In Geotalea uraniireducens (strain Rf4) (Geobacter uraniireducens), this protein is Elongation factor 4.